A 430-amino-acid chain; its full sequence is Enolase (430 aa).

(2R)-2-phosphoglycerate is bound at residue Gln-164. The Proton donor role is filled by Glu-206. Positions 243, 288, and 315 each coordinate Mg(2+). Residues Lys-340, Arg-369, Ser-370, and Lys-391 each coordinate (2R)-2-phosphoglycerate. Lys-340 functions as the Proton acceptor in the catalytic mechanism.

The protein belongs to the enolase family. It depends on Mg(2+) as a cofactor.

It is found in the cytoplasm. The protein resides in the secreted. Its subcellular location is the cell surface. The catalysed reaction is (2R)-2-phosphoglycerate = phosphoenolpyruvate + H2O. It functions in the pathway carbohydrate degradation; glycolysis; pyruvate from D-glyceraldehyde 3-phosphate: step 4/5. Catalyzes the reversible conversion of 2-phosphoglycerate (2-PG) into phosphoenolpyruvate (PEP). It is essential for the degradation of carbohydrates via glycolysis. The polypeptide is Enolase (Lysinibacillus sphaericus (strain C3-41)).